The sequence spans 376 residues: MEGNGERDTMMVEPPDSQEFAELWLRNLIVRDNSLWGKEEEIPDDLQEVPCDVLLSDMLQPQSSSSPPTSTVPVTSDYPGLLNFTLHFQESSGTKSVTCTYSPDLNKLFCQLAKTCPVLMAVSSSPPPGSVLRATAVYKRSEHVAEVVRRCPHHERSNDSSDGPAPPGHLLRVEGNSRAVYQEDGNTQAHSVVVPYEPPQVGSQSTTVLYNYMCNSSCMGGMNRRPILTIITLETQDGHLLGRRTFEVRVCACPGRDRKTEESNFKKQQEPKTSGKTLTKRSMKDPPSHPEASKKSKNSSSDDEIYTLQVRGKERYEFLKKINDGLELSDVVPPADQEKYRQKLLSKTCRKERDGAAGEPKRGKKRLVKEEKCDSD.

The transcription activation (acidic) stretch occupies residues 1–36 (MEGNGERDTMMVEPPDSQEFAELWLRNLIVRDNSLW). A DNA-binding region spans residues 77–268 (DYPGLLNFTL…KTEESNFKKQ (192 aa)). Residues 150–159 (RCPHHERSND) show a composition bias toward basic and acidic residues. The segment at 150 to 171 (RCPHHERSNDSSDGPAPPGHLL) is disordered. 4 residues coordinate Zn(2+): Cys151, His154, Cys214, and Cys218. Residues 249–256 (RVCACPGR) form an interaction with DNA region. Composition is skewed to basic and acidic residues over residues 257-270 (DRKT…KQQE) and 282-294 (SMKD…EASK). The tract at residues 257-306 (DRKTEESNFKKQQEPKTSGKTLTKRSMKDPPSHPEASKKSKNSSSDDEIY) is disordered. The Bipartite nuclear localization signal signature appears at 280-297 (KRSMKDPPSHPEASKKSK). An oligomerization region spans residues 303-334 (DEIYTLQVRGKERYEFLKKINDGLELSDVVPP). Residues 317–328 (EFLKKINDGLEL) carry the Nuclear export signal motif. Positions 342–376 (QKLLSKTCRKERDGAAGEPKRGKKRLVKEEKCDSD) are disordered. The interval 347–372 (KTCRKERDGAAGEPKRGKKRLVKEEK) is basic (repression of DNA-binding). The segment covering 349 to 361 (CRKERDGAAGEPK) has biased composition (basic and acidic residues).

It belongs to the p53 family. As to quaternary structure, binds DNA as a homotetramer. Requires Zn(2+) as cofactor.

The protein localises to the cytoplasm. It localises to the nucleus. Functionally, multifunctional transcription factor that induces cell cycle arrest, DNA repair or apoptosis upon binding to its target DNA sequence. Acts as a tumor suppressor in many tumor types; induces growth arrest or apoptosis depending on the physiological circumstances and cell type. Negatively regulates cell division by controlling expression of a set of genes required for this process. One of the activated genes is an inhibitor of cyclin-dependent kinases. Apoptosis induction seems to be mediated either by stimulation of BAX and FAS antigen expression, or by repression of Bcl-2 expression. This chain is Cellular tumor antigen p53 (tp53), found in Ictalurus punctatus (Channel catfish).